We begin with the raw amino-acid sequence, 175 residues long: Ribosome maturation factor RimM (175 aa).

Positions 96-175 constitute a PRC barrel domain; sequence EEDYYWHDLI…TITVDWDAGF (80 aa).

This sequence belongs to the RimM family. As to quaternary structure, binds ribosomal protein uS19.

It is found in the cytoplasm. In terms of biological role, an accessory protein needed during the final step in the assembly of 30S ribosomal subunit, possibly for assembly of the head region. Essential for efficient processing of 16S rRNA. May be needed both before and after RbfA during the maturation of 16S rRNA. It has affinity for free ribosomal 30S subunits but not for 70S ribosomes. In Haemophilus ducreyi (strain 35000HP / ATCC 700724), this protein is Ribosome maturation factor RimM.